A 151-amino-acid polypeptide reads, in one-letter code: Small ribosomal subunit protein uS15 (151 aa).

Residues 1-16 are compositionally biased toward basic residues; the sequence is MPHRSRHKKGRSRSVR. Residues 1–21 form a disordered region; sequence MPHRSRHKKGRSRSVRPAHPT.

Belongs to the universal ribosomal protein uS15 family. Part of the 30S ribosomal subunit.

In Pyrobaculum islandicum (strain DSM 4184 / JCM 9189 / GEO3), this protein is Small ribosomal subunit protein uS15.